Here is a 337-residue protein sequence, read N- to C-terminus: GTPase Obg (337 aa).

The Obg domain maps to 4 to 162; that stretch reads SNFVDYAKIH…RQIVFQLKLL (159 aa). The region spanning 163-329 is the OBG-type G domain; that stretch reads ADVGLVGFPN…LKDLLWEKLR (167 aa). Residues 169-176, 194-198, 216-219, 283-286, and 310-312 contribute to the GTP site; these read GFPNTGKS, FTTLE, DIPG, SKSD, and SSF. Mg(2+) is bound by residues S176 and T196.

This sequence belongs to the TRAFAC class OBG-HflX-like GTPase superfamily. OBG GTPase family. As to quaternary structure, monomer. Mg(2+) is required as a cofactor.

The protein resides in the cytoplasm. Functionally, an essential GTPase which binds GTP, GDP and possibly (p)ppGpp with moderate affinity, with high nucleotide exchange rates and a fairly low GTP hydrolysis rate. Plays a role in control of the cell cycle, stress response, ribosome biogenesis and in those bacteria that undergo differentiation, in morphogenesis control. The protein is GTPase Obg of Azobacteroides pseudotrichonymphae genomovar. CFP2.